We begin with the raw amino-acid sequence, 611 residues long: Urease subunit alpha 2 (611 aa).

A Urease domain is found at 154 to 611 (GGIDSHIHFI…LPMAQRYFLF (458 aa)). 3 residues coordinate Ni(2+): H159, H161, and K242. Position 242 is an N6-carboxylysine (K242). Substrate is bound at residue H244. Residues H271 and H297 each coordinate Ni(2+). Catalysis depends on H345, which acts as the Proton donor. Position 385 (D385) interacts with Ni(2+). The tract at residues 411–434 (GHLAPDQSAKTEQSLDNIMLSPTD) is disordered. Residues 418-434 (SAKTEQSLDNIMLSPTD) are compositionally biased toward polar residues.

It belongs to the metallo-dependent hydrolases superfamily. Urease alpha subunit family. In terms of assembly, heterotrimer of UreA (gamma), UreB (beta) and UreC (alpha) subunits. Three heterotrimers associate to form the active enzyme. Ni cation is required as a cofactor. Post-translationally, carboxylation allows a single lysine to coordinate two nickel ions.

The protein resides in the cytoplasm. The catalysed reaction is urea + 2 H2O + H(+) = hydrogencarbonate + 2 NH4(+). The protein operates within nitrogen metabolism; urea degradation; CO(2) and NH(3) from urea (urease route): step 1/1. This is Urease subunit alpha 2 from Psychrobacter cryohalolentis (strain ATCC BAA-1226 / DSM 17306 / VKM B-2378 / K5).